The sequence spans 681 residues: Conserved oligomeric Golgi complex subunit 2 (681 aa).

The protein belongs to the COG2 family. In terms of assembly, component of the conserved oligomeric Golgi complex which is composed of eight different subunits and is required for normal Golgi morphology and localization.

The protein localises to the golgi apparatus membrane. Functionally, required for normal Golgi morphology and function. This chain is Conserved oligomeric Golgi complex subunit 2 (cogc-2), found in Caenorhabditis elegans.